Here is a 417-residue protein sequence, read N- to C-terminus: Neuropeptide FF receptor 2 (417 aa).

Residues 1–45 (MGKRWDSNSSGSWDHIWSGNDTQHPWYSDINITYMNYYLHQPHVT) lie on the Extracellular side of the membrane. Asn-8, Asn-20, and Asn-31 each carry an N-linked (GlcNAc...) asparagine glycan. The chain crosses the membrane as a helical span at residues 46–66 (AVFISSYFLIFFLCMVGNTVV). Topologically, residues 67 to 82 (CFVVIRNRYMHTVTNF) are cytoplasmic. Residues 83–103 (FIFNLAISDLLVGIFCMPITL) form a helical membrane-spanning segment. Residues 104 to 119 (LDNIIAGWPFGSSMCK) lie on the Extracellular side of the membrane. Cys-118 and Cys-206 are joined by a disulfide. Residues 120–140 (ISGLVQGISVAASVFTLVAIA) traverse the membrane as a helical segment. Residues 141-160 (VDRFRCVVYPFKPKLTVKTA) are Cytoplasmic-facing. Residues 161–181 (FVMIVIIWGLAITIMTPSAIM) traverse the membrane as a helical segment. The Extracellular portion of the chain corresponds to 182–217 (LHVQEEKYYRVRLSSHNKTSTVYWCREDWPNQEMRR). The N-linked (GlcNAc...) asparagine glycan is linked to Asn-198. A helical membrane pass occupies residues 218–238 (IYTTVLFATIYLAPLSLIVIM). Residues 239-274 (YARIGASLFKTSAHSTGKQRLEQWHVSKKKQKVIKM) lie on the Cytoplasmic side of the membrane. Residues 275–295 (LLTVALLFILSWLPLWTLMML) traverse the membrane as a helical segment. Residues 296–310 (SDYADLSPNKLRVIN) lie on the Extracellular side of the membrane. Residues 311–331 (IYVYPFAHWLAFCNSSVNPII) traverse the membrane as a helical segment. At 332-417 (YGFFNENFRS…TGEATNSTET (86 aa)) the chain is on the cytoplasmic side. The tract at residues 378-417 (HEPASQNPSGENLGCRKSADNPTQESLMEETGEATNSTET) is disordered.

Belongs to the G-protein coupled receptor 1 family.

It localises to the cell membrane. Receptor for NPAF (A-18-F-amide) and NPFF (F-8-F-amide) neuropeptides, also known as morphine-modulating peptides. Can also be activated by a variety of naturally occurring or synthetic FMRF-amide like ligands. This receptor mediates its action by association with G proteins that activate a phosphatidylinositol-calcium second messenger system. This chain is Neuropeptide FF receptor 2 (Npffr2), found in Rattus norvegicus (Rat).